The sequence spans 104 residues: Large ribosomal subunit protein uL24 (104 aa).

The protein belongs to the universal ribosomal protein uL24 family. As to quaternary structure, part of the 50S ribosomal subunit.

In terms of biological role, one of two assembly initiator proteins, it binds directly to the 5'-end of the 23S rRNA, where it nucleates assembly of the 50S subunit. One of the proteins that surrounds the polypeptide exit tunnel on the outside of the subunit. This chain is Large ribosomal subunit protein uL24, found in Shewanella sp. (strain W3-18-1).